The sequence spans 1368 residues: MSACSDFVEHIWKPGSCKNCFCLRSDHQLTAGHPKARASSLPAGARLPARPEICRLEDEGVNGLAYSKPTIAVKPTMMTSETADLWTEASLSAEVPKVNWRRTPGKLLLQKQEDGPIVYLGSFRGMQKAAGPLACTDSNSRCPPAYTMVGLHNLEARVDRNTALQPVNFQEEKAGREELPSAQESFRQKLAAFTGMTSSCLKGPRPCTSPQPLRESLPSEDDSDQRCSPSGDSEGGEYCSILDCRPESRDAVHNTEGSGRRRGDCSPICWEQGTCTRPTEEEKQALNFPRECCGQGSTANPPHLGPKKPSLNSEAASSSDGLSCGSSRSGANSPFAPHLENDYCSLVKEPTSVKQQDSGCHLVNSGKYVGQAVDLQPPALPREAVQPEPIYAESAKRKKAAPVPQRPEPKKEQVSSGQVWTGDTWSQKTPSGWSQEREGPNAAPQVATTITVIAAHPEEDHRTIYLSSPDSAVGVQWPRGSLNQDLHGSGEEPLVVQGLSSRESHPHNMTENSSKEKPAIPPKLSKSSPGGSPVSPAAPPLTDHSDGNTSGSSVGSQPSSRVPTNLTSSCQTNGVAAGDPAKCPPQANSSVLDQRRPRYQTGAWSRQCRIEEEEEVGQELLSQSWGRELENGIADHSNSSTWHRLHPIDGASGQNGKTNSGMSKSASFAFEFPKDRGRLESFSPPPPPPKSRHLLKMNKSSSDLEKVSQSSAESLSPSFRGAHVSFTTGSTDSLASDSRTCSDGGPSCEATHSPTISGKKLFAPVPFPSGSTEDVSPSGPAQPPPLPQKKIVSRAASSPDGFFWTQGSPKPRTASPKLNLSHSETNVCAHDEPPLSYSLNSGNHPHHVFSSSEPLEKAFKGSVPWAPALGPANSKGGCGSPNLQGRAATSTSSSQLSVSSQASTGSSQLQLHSLLSSISSKEGTYAKLGGLYTQSLARLVTKCEDLFMGGLKTELRFDENSWSLFKLICNKPCCDSGDAIYYGATCSKDPDSIYAVKICKTPEPKSASYCSPSVPVHFNIQQDCGHFVASVPSSMLAFPDTSSKDPAPAAPSHTPAQEQDCVVVITREVPHQTASDFVRDSVASHRAEPEVYERRVCFLLLQLCNGLEHLKEHGIIHRDLCLENLLLVHCNPQSSPGPSANPSVPTTTSRCPSAAPAATTACQGGPGEKHLPRLIISNFLKAKQKPGGTTNLQQKKSQARLAPEIVSASQYRKFDEFQTGILIYELLHQPNPFEVRAQLRERDYRREDLPPLPTLSLYSPGLQQLAHLLLEADPIKRIRIGEAKRVLQCLLWGPRRELVEQPCPSEEVLCNTLHNWIDMKRALMMMKFAEKAVERRRGVELEDWLCCQYLASAEPGALLQSLKLLQLL.

The segment at 200–236 (CLKGPRPCTSPQPLRESLPSEDDSDQRCSPSGDSEGG) is disordered. Phosphotyrosine; by CSK is present on Tyr238. The disordered stretch occupies residues 297–330 (STANPPHLGPKKPSLNSEAASSSDGLSCGSSRSG). A compositionally biased stretch (low complexity) spans 317–330 (SSSDGLSCGSSRSG). A phosphotyrosine; by CSK mark is found at Tyr343 and Tyr391. 3 disordered regions span residues 392–443 (AESA…PNAA), 499–605 (LSSR…GAWS), and 636–792 (HSNS…KKIV). A compositionally biased stretch (polar residues) spans 414-434 (VSSGQVWTGDTWSQKTPSGWS). Basic and acidic residues predominate over residues 502–518 (RESHPHNMTENSSKEKP). Low complexity-rich tracts occupy residues 522–535 (PKLS…SPVS) and 550–563 (SGSS…SRVP). 2 stretches are compositionally biased toward polar residues: residues 564 to 574 (TNLTSSCQTNG) and 652 to 666 (SGQN…SKSA). Ser667 and Ser716 each carry phosphoserine. 2 stretches are compositionally biased toward polar residues: residues 707–717 (VSQSSAESLSP) and 725–741 (SFTT…SRTC). Phosphoserine occurs at positions 753 and 797. Disordered regions lie at residues 799–818 (PDGF…SPKL) and 873–901 (NSKG…VSSQ). A compositionally biased stretch (low complexity) spans 887–901 (AATSTSSSQLSVSSQ). The required for homodimerization stretch occupies residues 906-949 (SSQLQLHSLLSSISSKEGTYAKLGGLYTQSLARLVTKCEDLFMG). The 352-residue stretch at 940 to 1291 (VTKCEDLFMG…EAKRVLQCLL (352 aa)) folds into the Protein kinase domain. Over residues 1134-1144 (SSPGPSANPSV) the composition is skewed to polar residues. Residues 1134-1166 (SSPGPSANPSVPTTTSRCPSAAPAATTACQGGP) are disordered. The span at 1145–1162 (PTTTSRCPSAAPAATTAC) shows a compositional bias: low complexity. The tract at residues 1293 to 1368 (GPRRELVEQP…LQSLKLLQLL (76 aa)) is required for homodimerization.

Belongs to the protein kinase superfamily. In terms of assembly, homodimer. Dimerization leads to the catalytic activation of CSK. Interacts (via C-terminus) with RND2. Interacts with CSK (via SH2 domain) in a Tyr-391 phosphorylation-dependent manner; this interaction potentiates kinase activity of CSK. Interacts with NOTCH1 intracellular domain (N1ICD). Forms a complex with N1ICD and MAML1, in a MAML1-dependent manner. Post-translationally, phosphorylated by CSK on Tyr-238, Tyr-343, and Tyr-391; Tyr-391 is a primary site of phosphorylation. Highly-expressed in brain, including cortical and hippocampal pyramidal neurons, as well as in kidney, spleen, colon and small intestine.

It is found in the cytoplasm. It localises to the nucleus. The protein localises to the cell junction. Its subcellular location is the focal adhesion. Functionally, catalytically inactive protein kinase that acts as a scaffold protein. Functions as an effector of the small GTPase RND2, which stimulates RhoA activity and inhibits NGF-induced neurite outgrowth. Promotes Src family kinase (SFK) signallig by regulating the subcellular localization of CSK, a negative regulator of these kinases, leading to the regulation of cell morphology and motility by a CSK-dependent mechanism. Acts as a critical coactivator of Notch signaling. The polypeptide is Inactive tyrosine-protein kinase PRAG1 (Rattus norvegicus (Rat)).